The following is a 1000-amino-acid chain: Sop-2-related protein 1 (1000 aa).

3 disordered regions span residues 355 to 374 (KIMK…QYQQ), 379 to 422 (HQQH…GPSE), and 466 to 509 (APSE…VARG). Residues 390–404 (SSSSVPSTSSPSCSS) are compositionally biased toward low complexity. The span at 406–415 (ANRKEMETVR) shows a compositional bias: basic and acidic residues. Residues 489–502 (GPSQQQQIPGTSQQ) are compositionally biased toward low complexity. Positions 633-720 (REQILPQQYM…LNTSSVQPSE (88 aa)) are RNA-binding. The tract at residues 948 to 1000 (HRMHSQRPPSMGNSSTSSEASSTSPTNAATATSSPASNRPTTSTAQPPTLNPT) is disordered. The span at 960–992 (NSSTSSEASSTSPTNAATATSSPASNRPTTSTA) shows a compositional bias: low complexity.

As to quaternary structure, binds through its N-terminal region to the N-terminal region of sop-2.

It localises to the nucleus. Functionally, acts synergistically with sop-2 to maintain the transcriptionally repressive state of homeotic genes throughout development. Not required to initiate repression, but to maintain it during later stages of development. Also required to repress expression of other genes. Binds RNA in a sequence-independent manner. In Caenorhabditis elegans, this protein is Sop-2-related protein 1 (sor-1).